We begin with the raw amino-acid sequence, 531 residues long: Transcription factor LG2 (531 aa).

Disordered regions lie at residues 115–154 and 195–220; these read RHQQ…ASSA and LHGG…KLVD. Residues 116–154 show a composition bias toward polar residues; it reads HQQQLHSGNSQSVGSTGTDSSSAQNTMSQMELVSPASSA. In terms of domain architecture, bZIP spans 220-264; sequence DAKTERRLAQNREAARKSRLRKKAYVQQLETSRIRLQQVEHELQR. A basic motif region spans residues 222–242; the sequence is KTERRLAQNREAARKSRLRKK. Residues 224–231 carry the Nuclear localization signal motif; sequence ERRLAQNR. Residues 248-262 are leucine-zipper; sequence LETSRIRLQQVEHEL. The 215-residue stretch at 285-499 folds into the DOG1 domain; the sequence is AAMFDMEYAR…RALSNLWASR (215 aa).

It belongs to the bZIP family. In terms of assembly, binds DNA as a dimer. As to expression, expression in meristem/developing ligule regions.

The protein localises to the nucleus. Required for the formation of the blade-sheath boundary in leaves. Promotes flowering. This is Transcription factor LG2 from Zea mays (Maize).